The sequence spans 650 residues: Pentatricopeptide repeat-containing protein At2g41080 (650 aa).

PPR repeat units follow at residues 43–77 (NTSL…GFSS), 78–112 (DKFI…NYMS), 114–139 (NILI…MPDR), 140–174 (KLTT…GFSP), 175–209 (DEYT…GLEL), 210–240 (DLVV…MPVR), 241–275 (NLVA…GCRP), 276–310 (NKIT…GASS), 311–341 (VVAV…REDE), 342–372 (DEVM…MAEQ), 378–413 (NEVA…GFKP), and 414–444 (GLKH…MPIK). The tract at residues 449 to 524 (IWKTLLSACN…EAGISWFEHK (76 aa)) is type E motif. A type E(+) motif region spans residues 525 to 555 (GEVHQFKMGDRSQSKSKEIYSYLKELTLEMK). The tract at residues 556–650 (LKGYKPDTAS…NGKCSCGDYW (95 aa)) is type DYW motif.

The protein belongs to the PPR family. PCMP-H subfamily.

The protein is Pentatricopeptide repeat-containing protein At2g41080 (PCMP-H29) of Arabidopsis thaliana (Mouse-ear cress).